The following is a 324-amino-acid chain: Endochitinase A2 (324 aa).

Residues 1-20 (MSKLRIPILLVLFIVSCCSA) form the signal peptide. The region spanning 21–61 (EQCGTQAGGALCPGGLCCSKFGWCGSTSEYCGDGCQSQCSG) is the Chitin-binding type-1 domain. Disulfide bonds link Cys23/Cys38, Cys32/Cys44, Cys37/Cys51, and Cys55/Cys59. Residue Glu133 is the Proton donor of the active site. Intrachain disulfides connect Cys151-Cys170 and Cys269-Cys301. A propeptide spans 310 to 324 (SLPLSSILLDTVAAA) (removed in mature form).

The protein belongs to the glycosyl hydrolase 19 family. Chitinase class I subfamily.

The catalysed reaction is Random endo-hydrolysis of N-acetyl-beta-D-glucosaminide (1-&gt;4)-beta-linkages in chitin and chitodextrins.. Its function is as follows. Defense against chitin-containing fungal pathogens. The sequence is that of Endochitinase A2 (CHI2) from Pisum sativum (Garden pea).